The chain runs to 508 residues: Ras association domain-containing protein 10 (508 aa).

Residues 1-133 (MDPSEKKISV…VRFVLVRSEA (133 aa)) form the Ras-associating domain. Disordered regions lie at residues 51 to 81 (RRGLTEDPSGQLELPEPPDENDEDDDDAMPP) and 186 to 221 (KLNRRRQQQPSSPCSSTSSSTASSCSSSARTHESAS). Over residues 66–78 (EPPDENDEDDDDA) the composition is skewed to acidic residues. Over residues 195–214 (PSSPCSSTSSSTASSCSSSA) the composition is skewed to low complexity. Coiled-coil stretches lie at residues 235–266 (QDHTIRQQVQRLRELDREIDRYEAKVHLDRMR) and 319–358 (LEELARRCDDLVRLQEERAQQEELLERLSAEIQEELNQRW). The disordered stretch occupies residues 473–508 (GLAKSCPGNDEDSDTGLSSMHSQDSDSVPPVCESLV). Over residues 487 to 498 (TGLSSMHSQDSD) the composition is skewed to polar residues.

Expressed in neural progenitor cells (at protein level).

Its subcellular location is the cytoplasm. It localises to the cytosol. The protein localises to the cytoskeleton. It is found in the microtubule organizing center. The protein resides in the centrosome. Its subcellular location is the spindle pole. Functionally, plays an important role in regulating embryonic neurogenesis. The protein is Ras association domain-containing protein 10 (Rassf10) of Mus musculus (Mouse).